The sequence spans 548 residues: Tryprostatin B 6-hydroxylase (548 aa).

Transmembrane regions (helical) follow at residues 5-25 (MKCG…LWYF), 35-54 (WRYV…LLYA), and 73-93 (LLMV…RTLF). Residue Cys-491 coordinates heme.

Belongs to the cytochrome P450 family. It depends on heme as a cofactor.

Its subcellular location is the membrane. It catalyses the reaction tryprostatin B + reduced [NADPH--hemoprotein reductase] + O2 = 6-hydroxytryprostatin B + oxidized [NADPH--hemoprotein reductase] + H2O + H(+). It participates in mycotoxin biosynthesis. Its function is as follows. Cytochrome P450 monooxygenase; part of the gene cluster that mediates the biosynthesis of fumitremorgins, indole alkaloids that carry not only intriguing chemical structures, but also interesting biological and pharmacological activities. The biosynthesis of fumitremorgin-type alkaloids begins by condensation of the two amino acids L-tryptophan and L-proline to brevianamide F, catalyzed by the non-ribosomal peptide synthetase ftmPS/ftmA. Brevianamide F is then prenylated by the prenyltransferase ftmPT1/ftmB in the presence of dimethylallyl diphosphate, resulting in the formation of tryprostatin B. The three cytochrome P450 monooxygenases, ftmP450-1/ftmC, ftmP450-2/ftmE and ftmP450-3/FtmG, are responsible for the conversion of tryprostatin B to 6-hydroxytryprostatin B, tryprostatin A to fumitremorgin C and fumitremorgin C to 12,13-dihydroxyfumitremorgin C, respectively. The putative methyltransferase ftmMT/ftmD is expected for the conversion of 6-hydroxytryprostatin B to tryprostatin A. FtmPT2/FtmH catalyzes the prenylation of 12,13-dihydroxyfumitre-morgin C in the presence of dimethylallyl diphosphate, resulting in the formation of fumitremorgin B. Fumitremorgin B is further converted to verruculogen by ftmOx1/ftmF via the insertion of an endoperoxide bond between the two prenyl moieties. Finally, verruculogen is further converted to fumitremorgin A by the verruculogen prenyltransferase ftmPT3. This is Tryprostatin B 6-hydroxylase from Neosartorya fischeri (strain ATCC 1020 / DSM 3700 / CBS 544.65 / FGSC A1164 / JCM 1740 / NRRL 181 / WB 181) (Aspergillus fischerianus).